A 597-amino-acid polypeptide reads, in one-letter code: Polyphenol oxidase latent form, chloroplastic (597 aa).

Residues 1 to 49 (MATAPSPTTMGTYSSLISTNSFSTFLPNKSQLSLSGKSKHYVARRSSIS) constitute a chloroplast transit peptide. The disordered stretch occupies residues 49–70 (SCKATNNNNSNNQNEQQEESSR). A thylakoid-targeting transit peptide spans 50–101 (CKATNNNNSNNQNEQQEESSRLLGKLDRRNILIGLGGLYGATTLDRKPFAFA). A compositionally biased stretch (low complexity) spans 54–63 (NNNNSNNQNE). 2 disulfide bridges follow: C112–C128 and C127–C189. Cu cation-binding residues include H188, H209, H218, H341, H345, and H375. The 2'-(S-cysteinyl)-histidine (Cys-His) cross-link spans 192 to 209 (CNGAYPQVGFTDNDIQVH).

This sequence belongs to the tyrosinase family. Monomer. Cu(2+) serves as cofactor. As to expression, expressed in immature-green fruit.

The protein resides in the plastid. It is found in the chloroplast thylakoid lumen. The catalysed reaction is 2 catechol + O2 = 2 1,2-benzoquinone + 2 H2O. With respect to regulation, activated in the presence of substrate at low pH. Specific activity fluctuates during fruit ripening, starting at immature-green stage, reaching a peak at the breaker stage, followed by a sharp decrease until the half-ripe stage to remain stable during the following development stages. Triggered by CuSO(4) and by low concentrations of SDS. Repressed by several inhibitors including 4-hexylresorcinol, ascorbic acid, benzoic acid, kojic acid, glutathione (reduced form), L-cysteine and sodium metabisulfite. Inhibited by various salt such as FeSO(4), KCl, NaCl, CaCl(2), MnCl(2), NiCl(2) and AlCl(3). Spontaneously activated during storage at 4 degrees Celsius. Its function is as follows. Catalyzes the oxidation of mono- and o-diphenols to o-diquinones. Uses preferentially 4-methylcatechol and chlorogenic acid as substrates, followed by caffeic acid, pyrogallol, and catechol, but barely active toward dopamine and L-dopa. No activity detected with monophenols (e.g. phenol and tyramine). The sequence is that of Polyphenol oxidase latent form, chloroplastic from Prunus armeniaca (Apricot).